Reading from the N-terminus, the 564-residue chain is Urocanate hydratase (564 aa).

Residues 58–59 (GG), glutamine 136, 182–184 (GMG), glutamate 202, arginine 207, 245–246 (NA), 266–270 (QTSAH), 276–277 (YL), and tyrosine 325 each bind NAD(+). Cysteine 413 is an active-site residue. Position 495 (glycine 495) interacts with NAD(+).

Belongs to the urocanase family. The cofactor is NAD(+).

The protein resides in the cytoplasm. The enzyme catalyses 4-imidazolone-5-propanoate = trans-urocanate + H2O. The protein operates within amino-acid degradation; L-histidine degradation into L-glutamate; N-formimidoyl-L-glutamate from L-histidine: step 2/3. In terms of biological role, catalyzes the conversion of urocanate to 4-imidazolone-5-propionate. The polypeptide is Urocanate hydratase (Vibrio atlanticus (strain LGP32) (Vibrio splendidus (strain Mel32))).